The chain runs to 405 residues: Tryptophan synthase beta chain (405 aa).

The residue at position 98 (K98) is an N6-(pyridoxal phosphate)lysine.

It belongs to the TrpB family. Tetramer of two alpha and two beta chains. Pyridoxal 5'-phosphate serves as cofactor.

It catalyses the reaction (1S,2R)-1-C-(indol-3-yl)glycerol 3-phosphate + L-serine = D-glyceraldehyde 3-phosphate + L-tryptophan + H2O. It participates in amino-acid biosynthesis; L-tryptophan biosynthesis; L-tryptophan from chorismate: step 5/5. Its function is as follows. The beta subunit is responsible for the synthesis of L-tryptophan from indole and L-serine. The sequence is that of Tryptophan synthase beta chain from Xylella fastidiosa (strain M12).